We begin with the raw amino-acid sequence, 165 residues long: Large ribosomal subunit protein uL30 (165 aa).

Belongs to the universal ribosomal protein uL30 family. In terms of assembly, part of the 50S ribosomal subunit.

This chain is Large ribosomal subunit protein uL30, found in Thermoplasma acidophilum (strain ATCC 25905 / DSM 1728 / JCM 9062 / NBRC 15155 / AMRC-C165).